Here is a 157-residue protein sequence, read N- to C-terminus: Transcription inhibitor protein Gfh1 (157 aa).

A coiled-coil region spans residues 1-74; it reads MAREVKLTKA…LEDVLSRAVI (74 aa).

This sequence belongs to the GreA/GreB family. As to quaternary structure, interacts with RNAP.

In terms of biological role, inhibits all catalytic activities of RNA polymerase (RNAP) by partially occluding its substrate-binding site and preventing NTP binding. This chain is Transcription inhibitor protein Gfh1 (gfh1), found in Thermus aquaticus.